The following is a 314-amino-acid chain: MGVGRSEGGRRGAALGVLLALGVALLAVGSASEYDYVSYQSDLGPYPGGRFYTKPHQCVAIPADLRLCHSVGYDKMVLPNLLDHETMAEVKHQASSWVPLLNKNCHMGTQVFLCSLFAPVCLDRPVYPCRWLCEAVRDSCEPVMQFFGFFWPEMLKCDQFPQDYVCIAMTTPNATEVSRPKGTTVCPPCDNEMKSEAIVEHLCASEFALKMTIKEVKKENGDKVIIPRKRKALKLGPIRKKNLKKLVLLLKNGADCPCHQLDNLGHHFLIMGRQVKTQHLLTAIYKWDKKNKEFKKFMKKVKAPDCPTFPSVFK.

Residues 1–31 (MGVGRSEGGRRGAALGVLLALGVALLAVGSA) form the signal peptide. In terms of domain architecture, FZ spans 53–169 (TKPHQCVAIP…FPQDYVCIAM (117 aa)). 5 disulfides stabilise this stretch: Cys-58–Cys-121, Cys-68–Cys-114, Cys-105–Cys-140, Cys-129–Cys-166, and Cys-133–Cys-157. Asn-173 carries N-linked (GlcNAc...) asparagine glycosylation. 3 disulfides stabilise this stretch: Cys-186-Cys-256, Cys-189-Cys-258, and Cys-203-Cys-306. Residues 186 to 306 (CPPCDNEMKS…FMKKVKAPDC (121 aa)) form the NTR domain.

Belongs to the secreted frizzled-related protein (sFRP) family.

The protein localises to the secreted. Soluble frizzled-related proteins (sFRPS) function as modulators of Wnt signaling through direct interaction with Wnts. They have a role in regulating cell growth and differentiation in specific cell types. The sequence is that of Secreted frizzled-related protein 1 (SFRP1) from Gallus gallus (Chicken).